Reading from the N-terminus, the 350-residue chain is Inactive ADP-ribosyltransferase arh2 (350 aa).

This sequence belongs to the ADP-ribosylglycohydrolase family.

It localises to the cytoplasm. Its subcellular location is the myofibril. The protein localises to the sarcomere. Its function is as follows. Required for myofibril assembly and outgrowth of the cardiac chambers in the developing heart. Appears to be catalytically inactive, showing no activity against O-acetyl-ADP-ribose. The protein is Inactive ADP-ribosyltransferase arh2 (adprhl1) of Danio rerio (Zebrafish).